Reading from the N-terminus, the 294-residue chain is Cytidine deaminase (294 aa).

2 consecutive CMP/dCMP-type deaminase domains span residues 48–168 (DEDA…FGPK) and 186–294 (LTGD…TLLA). Residue 89 to 91 (NME) coordinates substrate. His102 contributes to the Zn(2+) binding site. Glu104 acts as the Proton donor in catalysis. Residues Cys129 and Cys132 each contribute to the Zn(2+) site.

Belongs to the cytidine and deoxycytidylate deaminase family. In terms of assembly, homodimer. Requires Zn(2+) as cofactor.

It catalyses the reaction cytidine + H2O + H(+) = uridine + NH4(+). The catalysed reaction is 2'-deoxycytidine + H2O + H(+) = 2'-deoxyuridine + NH4(+). This enzyme scavenges exogenous and endogenous cytidine and 2'-deoxycytidine for UMP synthesis. In Enterobacter sp. (strain 638), this protein is Cytidine deaminase.